Consider the following 156-residue polypeptide: Ribosomal RNA large subunit methyltransferase H (156 aa).

S-adenosyl-L-methionine contacts are provided by residues Leu-73, Gly-104, and 123-128; that span reads LSPLTL.

This sequence belongs to the RNA methyltransferase RlmH family. In terms of assembly, homodimer.

It is found in the cytoplasm. It catalyses the reaction pseudouridine(1915) in 23S rRNA + S-adenosyl-L-methionine = N(3)-methylpseudouridine(1915) in 23S rRNA + S-adenosyl-L-homocysteine + H(+). Functionally, specifically methylates the pseudouridine at position 1915 (m3Psi1915) in 23S rRNA. This chain is Ribosomal RNA large subunit methyltransferase H, found in Aliivibrio fischeri (strain MJ11) (Vibrio fischeri).